Consider the following 199-residue polypeptide: MNCVCRLVLVVLSLWPDTAVAPGPPPGSPRASPDPRAELDSTVLLTRSLLEDTRQLTIQLKDKFPADGDHNLDSLPTLAMSAGALGALQLPSVLTRLRADLLSYLRHVQWLRRAMGSSLKTLEPELGTLQTRLDRLLRRLQLLMSRLALPQLPPDPPAPPLAPPSSTWGGIRAAHAILGGLHLTLDWAVRGLLLLKTRL.

Positions 1–21 (MNCVCRLVLVVLSLWPDTAVA) are cleaved as a signal peptide. Positions 182 to 190 (HLTLDWAVR) are important for interaction with IL11RA and for the stimulation of cell proliferation.

The protein belongs to the IL-6 superfamily. As to quaternary structure, interacts with IL11RA to associate with IL6ST, giving rise to a multimeric signaling complex.

It localises to the secreted. Functionally, cytokine that stimulates the proliferation of hematopoietic stem cells and megakaryocyte progenitor cells and induces megakaryocyte maturation resulting in increased platelet production. Also promotes the proliferation of hepatocytes in response to liver damage. Binding to its receptor formed by IL6ST and IL11RA activates a signaling cascade that promotes cell proliferation. Signaling leads to the activation of intracellular protein kinases and the phosphorylation of STAT3. The interaction with the membrane-bound IL11RA and IL6ST stimulates 'classic signaling', whereas the binding of IL11 and soluble IL11RA to IL6ST stimulates 'trans-signaling'. In Macaca fascicularis (Crab-eating macaque), this protein is Interleukin-11 (IL11).